The chain runs to 138 residues: Large ribosomal subunit protein uL16 (138 aa).

Positions 1-15 are enriched in basic residues; that stretch reads MLSPRKVKYRKKQRG. Residues 1 to 21 are disordered; sequence MLSPRKVKYRKKQRGRLSGEA.

This sequence belongs to the universal ribosomal protein uL16 family. In terms of assembly, part of the 50S ribosomal subunit.

Functionally, binds 23S rRNA and is also seen to make contacts with the A and possibly P site tRNAs. This Borrelia duttonii (strain Ly) protein is Large ribosomal subunit protein uL16.